Reading from the N-terminus, the 430-residue chain is Formate-dependent phosphoribosylglycinamide formyltransferase (430 aa).

N(1)-(5-phospho-beta-D-ribosyl)glycinamide is bound by residues 26–27 and glutamate 86; that span reads EL. ATP contacts are provided by residues arginine 118, lysine 159, 199-202, and glutamate 207; that span reads EEHI. In terms of domain architecture, ATP-grasp spans 123–319; the sequence is ETLVKEAKVP…EFALHLRAVL (197 aa). Mg(2+)-binding residues include glutamate 276 and glutamate 288. Residues aspartate 295, lysine 375, and 382 to 383 contribute to the N(1)-(5-phospho-beta-D-ribosyl)glycinamide site; that span reads RR.

Belongs to the PurK/PurT family. In terms of assembly, homodimer.

It catalyses the reaction N(1)-(5-phospho-beta-D-ribosyl)glycinamide + formate + ATP = N(2)-formyl-N(1)-(5-phospho-beta-D-ribosyl)glycinamide + ADP + phosphate + H(+). It functions in the pathway purine metabolism; IMP biosynthesis via de novo pathway; N(2)-formyl-N(1)-(5-phospho-D-ribosyl)glycinamide from N(1)-(5-phospho-D-ribosyl)glycinamide (formate route): step 1/1. Functionally, involved in the de novo purine biosynthesis. Catalyzes the transfer of formate to 5-phospho-ribosyl-glycinamide (GAR), producing 5-phospho-ribosyl-N-formylglycinamide (FGAR). Formate is provided by PurU via hydrolysis of 10-formyl-tetrahydrofolate. This is Formate-dependent phosphoribosylglycinamide formyltransferase from Pyrococcus horikoshii (strain ATCC 700860 / DSM 12428 / JCM 9974 / NBRC 100139 / OT-3).